A 798-amino-acid chain; its full sequence is Transferrin receptor protein 2 (798 aa).

Topologically, residues 1–81 (MEQRWGLLRR…WAAAGRKAAP (81 aa)) are cytoplasmic. The short motif at 23-26 (YRRV) is the Endocytosis signal element. A helical; Signal-anchor for type II membrane protein transmembrane segment spans residues 82 to 102 (YLVLITLLIFTGAFLLGYVAF). Topologically, residues 103–798 (RGSCQACGDS…GDVWNIDNNF (696 aa)) are extracellular. 3 N-linked (GlcNAc...) asparagine glycosylation sites follow: asparagine 235, asparagine 334, and asparagine 535.

Belongs to the peptidase M28 family. M28B subfamily. In terms of tissue distribution, predominantly expressed in liver. Also expressed in kidney, spleen, brain, lung, heart and muscle with very low expression in kidney, muscle and heart.

It is found in the cell membrane. The protein resides in the cytoplasm. Mediates cellular uptake of transferrin-bound iron in a non-iron dependent manner. May be involved in iron metabolism, hepatocyte function and erythrocyte differentiation. This chain is Transferrin receptor protein 2 (Tfr2), found in Mus musculus (Mouse).